The sequence spans 205 residues: Heat shock protein beta-11 (205 aa).

In terms of domain architecture, sHSP spans 67-180 (VSPMTTFKPI…NERVIPITYT (114 aa)). The tract at residues 184 to 205 (KNPALQNSEPENQAVEAEAAEN) is disordered. Low complexity predominate over residues 192 to 205 (EPENQAVEAEAAEN).

Belongs to the small heat shock protein (HSP20) family. In terms of tissue distribution, expressed specifically in the rostral-most somites at 24 hpf. At 48 hpf, expression continues in the rostral-most somites and also in the notochord. Somite expression was restricted to the vicinity of the horizontal myoseptum. In adults, expressed in the heart.

The chain is Heat shock protein beta-11 (hspb11) from Danio rerio (Zebrafish).